A 1219-amino-acid chain; its full sequence is DNA ligase 4 (1219 aa).

11 residues coordinate ATP: Glu-251, Lys-253, Arg-258, Arg-273, Glu-303, Phe-342, Glu-418, Lys-423, Arg-434, Lys-440, and Lys-442. Lys-253 functions as the N6-AMP-lysine intermediate in the catalytic mechanism. Glu-303 serves as a coordination point for Mg(2+). Glu-418 lines the Mg(2+) pocket. Residues 604 to 632 form a disordered region; that stretch reads NGTTQKQKESESTQDNPKVNKSSKRGEKK. BRCT domains lie at 651 to 739 and 807 to 909; these read GKTS…PKYF and VYFY…VYTL. Disordered regions lie at residues 914 to 1126 and 1146 to 1197; these read MEES…MDMK and IPSQ…SDVV. Residues 932-960 are compositionally biased toward polar residues; it reads VASQGSAQTKEPASSKIAITSSRGRSNTR. Positions 1042 to 1051 are enriched in basic residues; sequence QRSRRGKKAA. Residues 1056–1065 show a composition bias toward acidic residues; the sequence is DESDENDELD. Basic and acidic residues-rich tracts occupy residues 1084–1096 and 1117–1126; these read VENE…DIAK and RNAKTEMDMK. Residues 1148-1159 show a composition bias toward polar residues; sequence SQKTTETSNRTT.

The protein belongs to the ATP-dependent DNA ligase family. In terms of assembly, interacts with XRCC4 via its tandem BRCT domains. Interacts with POLL. Requires Mg(2+) as cofactor. As to expression, widely expressed, with higher levels in young flowers and roots.

Its subcellular location is the nucleus. The enzyme catalyses ATP + (deoxyribonucleotide)n-3'-hydroxyl + 5'-phospho-(deoxyribonucleotide)m = (deoxyribonucleotide)n+m + AMP + diphosphate.. Functionally, DNA ligase involved in DNA non-homologous end joining (NHEJ); required for double-strand break (DSB) repair. May be involved for T-DNA integration even if not absolutely required. Seems to be dispensable under normal growth conditions. This chain is DNA ligase 4 (LIG4), found in Arabidopsis thaliana (Mouse-ear cress).